Here is a 331-residue protein sequence, read N- to C-terminus: Lipoyl synthase (331 aa).

Residues 1-33 (MSDALIATSSEAPQSPAEQYDPTRKQKSADKTA) are disordered. A compositionally biased stretch (polar residues) spans 7–17 (ATSSEAPQSPA). A compositionally biased stretch (basic and acidic residues) spans 21–33 (DPTRKQKSADKTA). The [4Fe-4S] cluster site is built by Cys-78, Cys-83, Cys-89, Cys-104, Cys-108, Cys-111, and Ser-318. One can recognise a Radical SAM core domain in the interval 89-307 (CFGKGTATFM…EEEAYKMGFT (219 aa)).

The protein belongs to the radical SAM superfamily. Lipoyl synthase family. [4Fe-4S] cluster is required as a cofactor.

Its subcellular location is the cytoplasm. It catalyses the reaction [[Fe-S] cluster scaffold protein carrying a second [4Fe-4S](2+) cluster] + N(6)-octanoyl-L-lysyl-[protein] + 2 oxidized [2Fe-2S]-[ferredoxin] + 2 S-adenosyl-L-methionine + 4 H(+) = [[Fe-S] cluster scaffold protein] + N(6)-[(R)-dihydrolipoyl]-L-lysyl-[protein] + 4 Fe(3+) + 2 hydrogen sulfide + 2 5'-deoxyadenosine + 2 L-methionine + 2 reduced [2Fe-2S]-[ferredoxin]. It participates in protein modification; protein lipoylation via endogenous pathway; protein N(6)-(lipoyl)lysine from octanoyl-[acyl-carrier-protein]: step 2/2. Catalyzes the radical-mediated insertion of two sulfur atoms into the C-6 and C-8 positions of the octanoyl moiety bound to the lipoyl domains of lipoate-dependent enzymes, thereby converting the octanoylated domains into lipoylated derivatives. This is Lipoyl synthase from Cupriavidus necator (strain ATCC 17699 / DSM 428 / KCTC 22496 / NCIMB 10442 / H16 / Stanier 337) (Ralstonia eutropha).